The primary structure comprises 275 residues: MSSALAPVGIFDSGVGGLTVARAIIDQLPDEHIIYVGDTGHGPYGPLSIPEVRAHALAIGDDLVGRGVKALVIACNTASAACLRDARERYEVPVVEVILPAVRRAVATTRNGRIGVIGTQATINSHAYQDAFAAARDTEITAVACPRFVDFVERGVTSGRQVLGLAEGYLEPLQRAQVDTLVLGCTHYPLLSGLIQLAMGDNVTLVSSAEETAKEVLRVLTERDLLHPHPDDPRAAGPSRVFEATGDPEAFTRLAARFLGPAVSGVRPVHHVRID.

Residues 12 to 13 and 44 to 45 contribute to the substrate site; these read DS and YG. The active-site Proton donor/acceptor is Cys75. 76–77 contacts substrate; it reads NT. The Proton donor/acceptor role is filled by Cys185. 186–187 contributes to the substrate binding site; the sequence is TH.

It belongs to the aspartate/glutamate racemases family.

It catalyses the reaction L-glutamate = D-glutamate. Its pathway is cell wall biogenesis; peptidoglycan biosynthesis. In terms of biological role, provides the (R)-glutamate required for cell wall biosynthesis. The polypeptide is Glutamate racemase (Mycobacterium avium (strain 104)).